Here is a 484-residue protein sequence, read N- to C-terminus: 6-phosphogluconate dehydrogenase, decarboxylating (484 aa).

NADP(+)-binding positions include 10-15, 33-35, 75-77, and asparagine 103; these read GLAVMG, NRT, and IKA. Residues asparagine 103 and 129 to 131 each bind substrate; that span reads SGG. The active-site Proton acceptor is lysine 183. 186-187 lines the substrate pocket; that stretch reads HN. The active-site Proton donor is glutamate 190. Substrate-binding residues include tyrosine 191, lysine 260, arginine 287, arginine 448, and histidine 454.

It belongs to the 6-phosphogluconate dehydrogenase family. In terms of assembly, homodimer.

It carries out the reaction 6-phospho-D-gluconate + NADP(+) = D-ribulose 5-phosphate + CO2 + NADPH. Its pathway is carbohydrate degradation; pentose phosphate pathway; D-ribulose 5-phosphate from D-glucose 6-phosphate (oxidative stage): step 3/3. In terms of biological role, catalyzes the oxidative decarboxylation of 6-phosphogluconate to ribulose 5-phosphate and CO(2), with concomitant reduction of NADP to NADPH. The protein is 6-phosphogluconate dehydrogenase, decarboxylating of Caenorhabditis elegans.